We begin with the raw amino-acid sequence, 24 residues long: Humanin-like 9 (24 aa).

The protein belongs to the humanin family. In terms of tissue distribution, highly expressed in the kidney, heart muscle and testis.

Its subcellular location is the secreted. It is found in the cytoplasm. Its function is as follows. Plays a role as a neuroprotective and antiapoptotic factor. The sequence is that of Humanin-like 9 from Homo sapiens (Human).